We begin with the raw amino-acid sequence, 308 residues long: Carnitine transport binding protein OpuCC (308 aa).

The N-terminal stretch at 1–22 (MKKKFIALFSVLLLTSSLFLSS) is a signal peptide. A lipid anchor (N-palmitoyl cysteine) is attached at cysteine 23. Residue cysteine 23 is the site of S-diacylglycerol cysteine attachment.

The protein belongs to the OsmX family. In terms of assembly, the complex is composed of two ATP-binding proteins (OpuCA), two transmembrane proteins (OpuCB and OpuCD) and a solute-binding protein (OpuCC).

Its subcellular location is the cell membrane. Part of the ABC transporter complex OpuCABCD involved in carnitine uptake. Involved, with BetL and GbuABC, in osmoprotection and cryoprotection of Listeria. Can also mediate weak glycine betaine transport. The sequence is that of Carnitine transport binding protein OpuCC (opuCC) from Listeria monocytogenes serotype 1/2a (strain 10403S).